The primary structure comprises 3678 residues: MLWWEEVEDCYEREDVQKKTFTKWINAQFSKFGKQHIDNLFSDLQDGKRLLDLLEGLTGQKLPKEKGSTRVHALNNVNKALRVLQKNNVDLVNIGSTDIVDGNHKLTLGLIWNIILHWQVKNVMKTIMAGLQQTNSEKILLSWVRQSTRNYPQVNVINFTSSWSDGLALNALIHSHRPDLFDWNSVVSQHSATQRLEHAFNIAKCQLGIEKLLDPEDVATTYPDKKSILMYITSLFQVLPQQVSIEAIQEVEMLPRTSSKVTREEHFQLHHQMHYSQQITVSLAQGYEQTSSSPKPRFKSYAFTQAAYVATSDSTQSPYPSQHLEAPRDKSLDSSLMETEVNLDSYQTALEEVLSWLLSAEDTLRAQGEISNDVEEVKEQFHAHEGFMMDLTSHQGLVGNVLQLGSQLVGKGKLSEDEEAEVQEQMNLLNSRWECLRVASMEKQSKLHKVLMDLQNQKLKELDDWLTKTEERTKKMEEEPFGPDLEDLKCQVQQHKVLQEDLEQEQVRVNSLTHMVVVVDESSGDHATAALEEQLKVLGDRWANICRWTEDRWIVLQDILLKWQHFTEEQCLFSTWLSEKEDAMKNIQTSGFKDQNEMMSSLHKISTLKIDLEKKKPTMEKLSSLNQDLLSALKNKSVTQKMEIWMENFAQRWDNLTQKLEKSSAQISQAVTTTQPSLTQTTVMETVTMVTTREQIMVKHAQEELPPPPPQKKRQITVDSELRKRLDVDITELHSWITRSEAVLQSSEFAVYRKEGNISDLQEKVNAIAREKAEKFRKLQDASRSAQALVEQMANEGVNAESIRQASEQLNSRWTEFCQLLSERVNWLEYQTNIITFYNQLQQLEQMTTTAENLLKTQSTTLSEPTAIKSQLKICKDEVNRLSALQPQIEQLKIQSLQLKEKGQGPMFLDADFVAFTNHFNHIFDGVRAKEKELQTIFDTLPPMRYQETMSSIRTWIQQSESKLSVPYLSVTEYEIMEERLGKLQALQSSLKEQQNGFNYLSDTVKEMAKKAPSEICQKYLSEFEEIEGHWKKLSSQLVESCQKLEEHMNKLRKFQNHIKTLQKWMAEVDVFLKEEWPALGDAEILKKQLKQCRLLVGDIQTIQPSLNSVNEGGQKIKSEAELEFASRLETELRELNTQWDHICRQVYTRKEALKAGLDKTVSLQKDLSEMHEWMTQAEEEYLERDFEYKTPDELQTAVEEMKRAKEEALQKETKVKLLTETVNSVIAHAPPSAQEALKKELETLTTNYQWLCTRLNGKCKTLEEVWACWHELLSYLEKANKWLNEVELKLKTMENVPAGPEEITEVLESLENLMHHSEENPNQIRLLAQTLTDGGVMDELINEELETFNSRWRELHEEAVRKQKLLEQSIQSAQEIEKSLHLIQESLEFIDKQLAAYITDKVDAAQMPQEAQKIQSDLTSHEISLEEMKKHNQGKDANQRVLSQIDVAQKKLQDVSMKFRLFQKPANFEQRLEESKMILDEVKMHLPALETKSVEQEVIQSQLSHCVNLYKSLSEVKSEVEMVIKTGRQIVQKKQTENPKELDERVTALKLHYNELGAKVTERKQQLEKCLKLSRKMRKEMNVLTEWLAATDTELTKRSAVEGMPSNLDSEVAWGKATQKEIEKQKAHLKSVTELGESLKMVLGKKETLVEDKLSLLNSNWIAVTSRVEEWLNLLLEYQKHMETFDQNIEQITKWIIHADELLDESEKKKPQQKEDILKRLKAEMNDMRPKVDSTRDQAAKLMANRGDHCRKVVEPQISELNRRFAAISHRIKTGKASIPLKELEQFNSDIQKLLEPLEAEIQQGVNLKEEDFNKDMSEDNEGTVNELLQRGDNLQQRITDERKREEIKIKQQLLQTKHNALKDLRSQRRKKALEISHQWYQYKRQADDLLKCLDEIEKKLASLPEPRDERKLKEIDRELQKKKEELNAVRRQAEGLSENGAAMAVEPTQIQLSKRWRQIESNFAQFRRLNFAQIHTLHEETMVVTTEDMPLDVSYVPSTYLTEISHILQALSEVDHLLNTPELCAKDFEDLFKQEESLKNIKDNLQQISGRIDIIHKKKTAALQSATSMEKVKVQEAVAQMDFQGEKLHRMYKERQGRFDRSVEKWRHFHYDMKVFNQWLNEVEQFFKKTQNPENWEHAKYKWYLKELQDGIGQRQAVVRTLNATGEEIIQQSSKTDVNILQEKLGSLSLRWHDICKELAERRKRIEEQKNVLSEFQRDLNEFVLWLEEADNIAITPLGDEQQLKEQLEQVKLLAEELPLRQGILKQLNETGGAVLVSAPIRPEEQDKLEKKLKQTNLQWIKVSRALPEKQGELEVHLKDFRQLEEQLDHLLLWLSPIRNQLEIYNQPSQAGPFDIKEIEVTVHGKQADVERLLSKGQHLYKEKPSTQPVKRKLEDLRSEWEAVNHLLRELRTKQPDRAPGLSTTGASASQTVTLVTQSVVTKETVISKLEMPSSLLLEVPALADFNRAWTELTDWLSLLDRVIKSQRVMVGDLEDINEMIIKQKATLQDLEQRRPQLEELITAAQNLKNKTSNQEARTIITDRIERIQIQWDEVQEQLQNRRQQLNEMLKDSTQWLEAKEEAEQVIGQVRGKLDSWKEGPHTVDAIQKKITETKQLAKDLRQRQISVDVANDLALKLLRDYSADDTRKVHMITENINTSWGNIHKRVSEQEAALEETHRLLQQFPLDLEKFLSWITEAETTANVLQDASRKEKLLEDSRGVRELMKPWQDLQGEIETHTDIYHNLDENGQKILRSLEGSDEAPLLQRRLDNMNFKWSELQKKSLNIRSHLEASSDQWKRLHLSLQELLVWLQLKDDELSRQAPIGGDFPAVQKQNDIHRAFKRELKTKEPVIMSTLETVRIFLTEQPLEGLEKLYQEPRELPPEERAQNVTRLLRKQAEEVNAEWDKLNLRSADWQRKIDEALERLQELQEAADELDLKLRQAEVIKGSWQPVGDLLIDSLQDHLEKVKALRGEIAPLKENVNRVNDLAHQLTTLGIQLSPYNLSTLEDLNTRWRLLQVAVEDRVRQLHEAHRDFGPASQHFLSTSVQGPWERAISPNKVPYYINHETQTTCWDHPKMTELYQSLADLNNVRFSAYRTAMKLRRLQKALCLDLLSLSAACDALDQHNLKQNDQPMDILQIINCLTTIYDRLEQEHNNLVNVPLCVDMCLNWLLNVYDTGRTGRIRVLSFKTGIISLCKAHLEDKYRYLFKQVASSTGFCDQRRLGLLLHDSIQIPRQLGEVASFGGSNIEPSVRSCFQFANNKPEIEAALFLDWMRLEPQSMVWLPVLHRVAAAETAKHQAKCNICKECPIIGFRYRSLKHFNYDICQSCFFSGRVAKGHKMHYPMVEYCTPTTSGEDVRDFAKVLKNKFRTKRYFAKHPRMGYLPVQTVLEGDNMETPVTLINFWPVDSAPASSPQLSHDDTHSRIEHYASRLAEMENSNGSYLNDSISPNESIDDEHLLIQHYCQSLNQDSPLSQPRSPAQILISLESEERGELERILADLEEENRNLQAEYDRLKQQHEHKGLSPLPSPPEMMPTSPQSPRDAELIAEAKLLRQHKGRLEARMQILEDHNKQLESQLHRLRQLLEQPQAEAKVNGTTVSSPSTSLQRSDSSQPMLLRVVGSQTSESMGEEDLLSPPQDTSTGLEEVMEQLNNSFPSSRGRNAPGKPMREDTM.

The interval 1–240 (MLWWEEVEDC…YITSLFQVLP (240 aa)) is actin-binding. 2 consecutive Calponin-homology (CH) domains span residues 15–119 (DVQK…LHWQ) and 134–240 (TNSE…QVLP). The segment at 63–72 (PKEKGSTRVH) is ANK2- and ANK-3 binding. Residues 313–333 (DSTQSPYPSQHLEAPRDKSLD) are disordered. 24 Spectrin repeats span residues 341 to 449 (VNLD…KLHK), 450 to 558 (VLMD…VLQD), 561 to 669 (LKWQ…QISQ), 721 to 830 (ELRK…WLEY), 832 to 936 (TNII…ELQT), 945 to 1047 (RYQE…KLEE), 1050 to 1156 (NKLR…ALKA), 1159 to 1265 (DKTV…TLEE), 1268 to 1369 (ACWH…LLEQ), 1370 to 1465 (SIQS…LFQK), 1470 to 1570 (EQRL…QLEK), 1573 to 1678 (KLSR…LLLE), 1681 to 1780 (KHME…KASI), 1781 to 1876 (PLKE…KALE), 1879 to 1981 (HQWY…TLHE), 1994 to 2103 (DVSY…RFDR), 2106 to 2210 (EKWR…RIEE), 2213 to 2318 (NVLS…ELEV), 2319 to 2416 (HLKD…LRTK), 2468 to 2570 (FNRA…QLNE), 2573 to 2679 (KDST…ALEE), 2682 to 2795 (RLLQ…HLEA), 2801 to 2923 (KRLH…RKID), and 2928 to 3033 (RLQE…QLHE). Residues 1417 to 1915 (SDLTSHEISL…PEPRDERKLK (499 aa)) are interaction with SYNM. One can recognise a WW domain in the interval 3048–3081 (TSVQGPWERAISPNKVPYYINHETQTTCWDHPKM). The segment at 3051–3401 (QGPWERAISP…TVLEGDNMET (351 aa)) is interaction with SYNM. The ZZ-type; degenerate zinc-finger motif lies at 3301–3357 (KHQAKCNICKECPIIGFRYRSLKHFNYDICQSCFFSGRVAKGHKMHYPMVEYCTPTT). Zn(2+) is bound by residues cysteine 3306, cysteine 3309, cysteine 3330, and cysteine 3333. Residues 3459–3511 (DDEHLLIQHYCQSLNQDSPLSQPRSPAQILISLESEERGELERILADLEEENR) form a binds to SNTB1 region. A phosphoserine mark is found at serine 3476, serine 3483, and serine 3493. Disordered regions lie at residues 3521-3547 (KQQH…QSPR) and 3596-3678 (EAKV…EDTM). Polar residues-rich tracts occupy residues 3600–3619 (NGTT…SSQP) and 3655–3665 (QLNNSFPSSRG). 6 positions are modified to phosphoserine: serine 3605, serine 3606, serine 3610, serine 3616, serine 3617, and serine 3659.

Interacts with SYNM. Interacts with the syntrophins SNTG1 and SNTG2. Interacts with KRT19. Component of the dystrophin-associated glycoprotein complex which is composed of three subcomplexes: a cytoplasmic complex comprised of DMD (or UTRN), DTNA and a number of syntrophins, such as SNTB1, SNTB2, SNTG1 and SNTG2, the transmembrane dystroglycan complex, and the sarcoglycan-sarcospan complex. Interacts with DAG1 (betaDAG1) with DMD; the interaction is inhibited by phosphorylation on the PPXY motif of DAG1. Interacts with SYNM; SNTA1 and SNTB1. Interacts with CMYA5. Directly interacts with ANK2 and ANK3; these interactions do not interfere with betaDAG1-binding and are necessary for proper localization in muscle cells. Identified in a dystroglycan complex that contains at least PRX, DRP2, UTRN, DMD and DAG1. Interacts with DTNB. Interacts with PGM5; the interaction is direct. Interacts with NOS1; localizes NOS1 to sarcolemma in muscle cells. As to expression, detected in quadriceps muscle and in sciatic nerve (at protein level). Expressed in the sarcolemma of the soleus muscle (at protein level). Differentially expressed during skeletal muscle, heart, and brain development. Also expressed in retina.

The protein resides in the cell membrane. It is found in the sarcolemma. Its subcellular location is the cytoplasm. The protein localises to the cytoskeleton. It localises to the postsynaptic cell membrane. Anchors the extracellular matrix to the cytoskeleton via F-actin. Ligand for dystroglycan. Component of the dystrophin-associated glycoprotein complex which accumulates at the neuromuscular junction (NMJ) and at a variety of synapses in the peripheral and central nervous systems and has a structural function in stabilizing the sarcolemma. Also implicated in signaling events and synaptic transmission. The sequence is that of Dystrophin (Dmd) from Mus musculus (Mouse).